The chain runs to 274 residues: Shikimate dehydrogenase (NADP(+)) (274 aa).

Shikimate is bound by residues 14–16 (SLS) and threonine 61. Residue lysine 65 is the Proton acceptor of the active site. Shikimate-binding residues include asparagine 85 and aspartate 106. Residues 130–134 (GAGGA), 153–158 (NRTAER), and alanine 217 each bind NADP(+). Tyrosine 219 serves as a coordination point for shikimate. Glycine 240 is an NADP(+) binding site.

It belongs to the shikimate dehydrogenase family. As to quaternary structure, homodimer.

The enzyme catalyses shikimate + NADP(+) = 3-dehydroshikimate + NADPH + H(+). It functions in the pathway metabolic intermediate biosynthesis; chorismate biosynthesis; chorismate from D-erythrose 4-phosphate and phosphoenolpyruvate: step 4/7. Functionally, involved in the biosynthesis of the chorismate, which leads to the biosynthesis of aromatic amino acids. Catalyzes the reversible NADPH linked reduction of 3-dehydroshikimate (DHSA) to yield shikimate (SA). The sequence is that of Shikimate dehydrogenase (NADP(+)) from Halorubrum lacusprofundi (strain ATCC 49239 / DSM 5036 / JCM 8891 / ACAM 34).